A 300-amino-acid polypeptide reads, in one-letter code: Recombination-associated protein RdgC (300 aa).

It belongs to the RdgC family.

The protein resides in the cytoplasm. The protein localises to the nucleoid. Functionally, may be involved in recombination. The sequence is that of Recombination-associated protein RdgC from Janthinobacterium sp. (strain Marseille) (Minibacterium massiliensis).